The sequence spans 430 residues: Cytochrome c biogenesis protein CcsB (430 aa).

The next 3 helical transmembrane spans lie at 14–34 (LRIA…GTAI), 72–92 (SSWF…CSWR), and 162–182 (AGPM…VWGS).

This sequence belongs to the Ccs1/CcsB family. As to quaternary structure, may interact with CcsA.

It localises to the cellular thylakoid membrane. In terms of biological role, required during biogenesis of c-type cytochromes (cytochrome c6 and cytochrome f) at the step of heme attachment. The polypeptide is Cytochrome c biogenesis protein CcsB (Prochlorococcus marinus (strain MIT 9313)).